The sequence spans 399 residues: Acetate kinase (399 aa).

Asn-7 serves as a coordination point for Mg(2+). Lys-14 lines the ATP pocket. Arg-91 contributes to the substrate binding site. Catalysis depends on Asp-148, which acts as the Proton donor/acceptor. ATP-binding positions include 208–212 (HLGNG), 283–285 (DFR), and 331–335 (GLGEN). Glu-384 is a Mg(2+) binding site.

This sequence belongs to the acetokinase family. Homodimer. Mg(2+) serves as cofactor. It depends on Mn(2+) as a cofactor.

The protein resides in the cytoplasm. The catalysed reaction is acetate + ATP = acetyl phosphate + ADP. Its pathway is metabolic intermediate biosynthesis; acetyl-CoA biosynthesis; acetyl-CoA from acetate: step 1/2. In terms of biological role, catalyzes the formation of acetyl phosphate from acetate and ATP. Can also catalyze the reverse reaction. In Desulfitobacterium hafniense (strain Y51), this protein is Acetate kinase.